The sequence spans 224 residues: RNA-binding protein 24-B (224 aa).

Positions 11–88 (TKIFVGGLPY…RKANVNLAYL (78 aa)) constitute an RRM domain.

It is found in the nucleus. Its subcellular location is the cytoplasm. Its function is as follows. Multifunctional RNA-binding protein involved in the regulation of pre-mRNA splicing, mRNA stability and mRNA translation important for cell fate decision and differentiation. Plays a major role in pre-mRNA alternative splicing regulation. Mediates preferentially muscle-specific exon inclusion in numerous mRNAs important for striated cardiac and skeletal muscle cell differentiation. Binds to intronic splicing enhancer (ISE) composed of stretches of GU-rich motifs localized in flanking intron of exon that will be included by alternative splicing. Involved in embryonic stem cell (ESC) transition to cardiac cell differentiation by promoting pre-mRNA alternative splicing events of several pluripotency and/or differentiation genes. Plays a role in the regulation of mRNA stability and mRNA translation to which it is bound. Involved in myogenic differentiation by regulating myog levels. Binds to a huge amount of mRNAs. Required for embryonic heart development, sarcomer and M-band formation in striated muscles. The polypeptide is RNA-binding protein 24-B (rbm24-b) (Xenopus laevis (African clawed frog)).